A 308-amino-acid chain; its full sequence is Oxygen-dependent coproporphyrinogen-III oxidase (308 aa).

Ser100 provides a ligand contact to substrate. Residues His104 and His114 each contribute to the a divalent metal cation site. The active-site Proton donor is His114. 116-118 (NFR) contacts substrate. Residues His153 and His183 each contribute to the a divalent metal cation site. An important for dimerization region spans residues 248 to 283 (YVEFNLVFDRGTIFGLQSGGRTESILSSMPPIATWK). 266 to 268 (GGR) is a binding site for substrate.

It belongs to the aerobic coproporphyrinogen-III oxidase family. Homodimer. Requires a divalent metal cation as cofactor.

Its subcellular location is the cytoplasm. The catalysed reaction is coproporphyrinogen III + O2 + 2 H(+) = protoporphyrinogen IX + 2 CO2 + 2 H2O. Its pathway is porphyrin-containing compound metabolism; protoporphyrin-IX biosynthesis; protoporphyrinogen-IX from coproporphyrinogen-III (O2 route): step 1/1. Functionally, involved in the heme biosynthesis. Catalyzes the aerobic oxidative decarboxylation of propionate groups of rings A and B of coproporphyrinogen-III to yield the vinyl groups in protoporphyrinogen-IX. The chain is Oxygen-dependent coproporphyrinogen-III oxidase from Francisella tularensis subsp. tularensis (strain FSC 198).